Reading from the N-terminus, the 172-residue chain is Adenine phosphoribosyltransferase (172 aa).

The protein belongs to the purine/pyrimidine phosphoribosyltransferase family. In terms of assembly, homodimer.

It is found in the cytoplasm. The enzyme catalyses AMP + diphosphate = 5-phospho-alpha-D-ribose 1-diphosphate + adenine. It participates in purine metabolism; AMP biosynthesis via salvage pathway; AMP from adenine: step 1/1. Its function is as follows. Catalyzes a salvage reaction resulting in the formation of AMP, that is energically less costly than de novo synthesis. This is Adenine phosphoribosyltransferase from Prochlorococcus marinus (strain NATL1A).